The primary structure comprises 96 residues: uncharacterized protein (96 aa).

The segment at 35–96 is disordered; sequence SPSGEKRSTK…KKFSSPPHPK (62 aa). The segment covering 38–52 has biased composition (basic and acidic residues); that stretch reads GEKRSTKNQTKENTK. Positions 69–80 are enriched in polar residues; the sequence is ANQQTNENSKPL.

This is an uncharacterized protein from Dictyostelium discoideum (Social amoeba).